The following is a 506-amino-acid chain: Probable cytochrome P450 309a1 (506 aa).

T75, T78, and T81 each carry phosphothreonine. C452 is a heme binding site.

This sequence belongs to the cytochrome P450 family. Heme is required as a cofactor.

Its subcellular location is the endoplasmic reticulum membrane. The protein localises to the microsome membrane. In terms of biological role, may be involved in the metabolism of insect hormones and in the breakdown of synthetic insecticides. The sequence is that of Probable cytochrome P450 309a1 (Cyp309a1) from Drosophila melanogaster (Fruit fly).